The primary structure comprises 239 residues: Ribonuclease PH (239 aa).

Phosphate is bound by residues R86 and 124–126 (GTR).

It belongs to the RNase PH family. In terms of assembly, homohexameric ring arranged as a trimer of dimers.

It catalyses the reaction tRNA(n+1) + phosphate = tRNA(n) + a ribonucleoside 5'-diphosphate. Functionally, phosphorolytic 3'-5' exoribonuclease that plays an important role in tRNA 3'-end maturation. Removes nucleotide residues following the 3'-CCA terminus of tRNAs; can also add nucleotides to the ends of RNA molecules by using nucleoside diphosphates as substrates, but this may not be physiologically important. Probably plays a role in initiation of 16S rRNA degradation (leading to ribosome degradation) during starvation. The chain is Ribonuclease PH from Rickettsia akari (strain Hartford).